Here is a 461-residue protein sequence, read N- to C-terminus: CBL-interacting protein kinase 1 (461 aa).

The Protein kinase domain maps to 19–274; that stretch reads YEIGRTLGEG…IAGIKEHEWF (256 aa). Residues 25 to 33 and lysine 48 each bind ATP; that span reads LGEGNFGKV. Aspartate 142 functions as the Proton acceptor in the catalytic mechanism. The tract at residues 160–189 is activation loop; the sequence is DFGLSALPQHLGNDGLLHTTCGSPNYIAPE. In terms of domain architecture, NAF spans 308–332; that stretch reads EKPTHINAFQLIGMASALDLSGFFE. The tract at residues 338–367 is PPI; that stretch reads QRKIRFTSTHSPKDLFDKIENVVTEMGFQV.

It belongs to the protein kinase superfamily. CAMK Ser/Thr protein kinase family. SNF1 subfamily. Mn(2+) is required as a cofactor.

It carries out the reaction L-seryl-[protein] + ATP = O-phospho-L-seryl-[protein] + ADP + H(+). It catalyses the reaction L-threonyl-[protein] + ATP = O-phospho-L-threonyl-[protein] + ADP + H(+). Functionally, CIPK serine-threonine protein kinases interact with CBL proteins. Binding of a CBL protein to the regulatory NAF domain of CIPK protein lead to the activation of the kinase in a calcium-dependent manner. The protein is CBL-interacting protein kinase 1 (CIPK1) of Oryza sativa subsp. japonica (Rice).